The sequence spans 459 residues: ATP-dependent protease ATPase subunit HslU (459 aa).

Residues valine 18, 60–65, aspartate 269, glutamate 337, and arginine 409 each bind ATP; that span reads GVGKTE.

The protein belongs to the ClpX chaperone family. HslU subfamily. A double ring-shaped homohexamer of HslV is capped on each side by a ring-shaped HslU homohexamer. The assembly of the HslU/HslV complex is dependent on binding of ATP.

The protein localises to the cytoplasm. In terms of biological role, ATPase subunit of a proteasome-like degradation complex; this subunit has chaperone activity. The binding of ATP and its subsequent hydrolysis by HslU are essential for unfolding of protein substrates subsequently hydrolyzed by HslV. HslU recognizes the N-terminal part of its protein substrates and unfolds these before they are guided to HslV for hydrolysis. This is ATP-dependent protease ATPase subunit HslU from Myxococcus xanthus (strain DK1622).